Consider the following 347-residue polypeptide: Protein RecA (347 aa).

67-74 is a binding site for ATP; it reads GPESSGKT.

The protein belongs to the RecA family.

It is found in the cytoplasm. Functionally, can catalyze the hydrolysis of ATP in the presence of single-stranded DNA, the ATP-dependent uptake of single-stranded DNA by duplex DNA, and the ATP-dependent hybridization of homologous single-stranded DNAs. It interacts with LexA causing its activation and leading to its autocatalytic cleavage. The polypeptide is Protein RecA (Helicobacter pylori (strain Shi470)).